The primary structure comprises 501 residues: MAAAAAAVNGSLDRLDVHERKAQKSYWEEHSGELNLEAIMLDSRAAELDKEERPEVLSLLPSYEGKSILELGAGIGRFTGELAKTSGHVFAVDFVESVIKKNGSINDHYGNTSFMCADVTSTDLMIEANSIDLIFSNWLLMYLSDEEIDKLVERMVKWLKVGGYIFFRESCFHQTGDTERKFNPTHYREPRFYTKVFKECQTFNQDGTSFKLSLITFKCIGAYVNIKKDQNQICWLWKKVNSSEDGGFQSFLDNVQYKATGILRYERIFGDGYVSTGGAETTKEFVEKLNLKPGQKVLDVGCGIGGGDFYMAEKYGTHVVGIDLSINMIMFALERSIGCKCLVEFEVADCTTKTYPDHMFDVIYSRDTILHIQDKPSLFKSFFKWLKPGGKVLISDYCKSPGKPSEEFATYIKQRGYDLHDVEAYGQMLKNAGFSHVIAEDRTDQFLSVLQKELDKFEKNKDDFLSEFAQEDYDDIVNGWKAKLQRSSAGEQRWGLFVATK.

6 residues coordinate S-adenosyl-L-homocysteine: Gly-72, Arg-77, Asp-93, Asp-118, Val-119, and Asn-137. Phosphocholine contacts are provided by Ser-170, Thr-175, Gly-176, Arg-180, and Tyr-187. N-methylethanolamine phosphate contacts are provided by residues 256 to 257 and Tyr-265; that span reads QY. Phosphocholine is bound at residue Tyr-265. Residues Val-274, Ser-275, Gly-301, Asp-323, Asp-349, Cys-350, and Arg-366 each contribute to the S-adenosyl-L-homocysteine site. Positions 397, 411, 415, 417, and 483 each coordinate phosphocholine. N-methylethanolamine phosphate contacts are provided by residues Tyr-397, Tyr-411, 415–417, and Lys-483; that span reads RGY.

It belongs to the class I-like SAM-binding methyltransferase superfamily. PEAMT family.

The catalysed reaction is phosphoethanolamine + S-adenosyl-L-methionine = N-methylethanolamine phosphate + S-adenosyl-L-homocysteine + H(+). It catalyses the reaction N-methylethanolamine phosphate + S-adenosyl-L-methionine = N,N-dimethylethanolamine phosphate + S-adenosyl-L-homocysteine + H(+). The enzyme catalyses N,N-dimethylethanolamine phosphate + S-adenosyl-L-methionine = phosphocholine + S-adenosyl-L-homocysteine + H(+). Its pathway is phospholipid metabolism; phosphatidylcholine biosynthesis; phosphocholine from phosphoethanolamine: step 1/1. Its function is as follows. Involved in phosphocholine biosynthesis. Catalyzes the N-methylation of phosphoethanolamine, phosphomonomethylethanolamine and phosphodimethylethanolamine, the three methylation steps required to convert phosphoethanolamine to phosphocholine (PC). May be involved in root development. The polypeptide is Phosphoethanolamine N-methyltransferase 1 (Zea mays (Maize)).